We begin with the raw amino-acid sequence, 131 residues long: Cuticle protein 79, isoform B (131 aa).

3 tandem repeats follow at residues 37-40 (AAPA), 45-48 (AAPA), and 53-56 (AAPA).

In terms of biological role, component of the cuticle of migratory locust which contains more than 100 different structural proteins. This chain is Cuticle protein 79, isoform B, found in Locusta migratoria (Migratory locust).